A 120-amino-acid polypeptide reads, in one-letter code: NAD(P)H-quinone oxidoreductase subunit 3 (120 aa).

3 helical membrane-spanning segments follow: residues 11 to 31 (LIFL…SYLI), 64 to 84 (MFAL…PWAV), and 89 to 109 (LGLL…VALV).

The protein belongs to the complex I subunit 3 family. In terms of assembly, NDH-1 can be composed of about 15 different subunits; different subcomplexes with different compositions have been identified which probably have different functions.

Its subcellular location is the cell inner membrane. It carries out the reaction a plastoquinone + NADH + (n+1) H(+)(in) = a plastoquinol + NAD(+) + n H(+)(out). It catalyses the reaction a plastoquinone + NADPH + (n+1) H(+)(in) = a plastoquinol + NADP(+) + n H(+)(out). Functionally, NDH-1 shuttles electrons from an unknown electron donor, via FMN and iron-sulfur (Fe-S) centers, to quinones in the respiratory and/or the photosynthetic chain. The immediate electron acceptor for the enzyme in this species is believed to be plastoquinone. Couples the redox reaction to proton translocation, and thus conserves the redox energy in a proton gradient. Cyanobacterial NDH-1 also plays a role in inorganic carbon-concentration. This chain is NAD(P)H-quinone oxidoreductase subunit 3, found in Gloeobacter violaceus (strain ATCC 29082 / PCC 7421).